Here is a 650-residue protein sequence, read N- to C-terminus: MSVSTAKRSLDVVSPGSLAEFEGSKSRHDEIENEHRRTGTRDGEDSEQPKKKGSKTSKKQDLDPETKQKRTAQNRAAQRAFRERKERKMKELEKKVQSLESIQQQNEVEATFLRDQLITLVNELKKYRPETRNDSKVLEYLARRDPNLHFSKNNVNHSNSEPIDTPNDDIQENVKQKMNFTFQYPLDNDNDNDNSKNVGKQLPSPNDPSHSAPMPINQTQKKLSDATDSSSATLDSLSNSNDVLNNTPNSSTSMDWLDNVIYTNRFVSGDDGSNSKTKNLDSNMFSNDFNFENQFDEQVSEFCSKMNQVCGTRQCPIPKKPISALDKEVFASSSILSSNSPALTNTWESHSNITDNTPANVIATDATKYENSFSGFGRLGFDMSANHYVVNDNSTGSTDSTGSTGNKNKKNNNNSDDVLPFISESPFDMNQVTNFFSPGSTGIGNNAASNTNPSLLQSSKEDIPFINANLAFPDDNSTNIQLQPFSESQSQNKFDYDMFFRDSSKEGNNLFGEFLEDDDDDKKAANMSDDESSLIKNQLINEEPELPKQYLQSVPGNESEISQKNGSSLQNADKINNGNDNDNDNDVVPSKEGSLLRCSEIWDRITTHPKYSDIDVDGLCSELMAKAKCSERGVVINAEDVQLALNKHMN.

The interval 1–89 (MSVSTAKRSL…AFRERKERKM (89 aa)) is disordered. Ser9, Ser14, and Ser17 each carry phosphoserine. Composition is skewed to basic and acidic residues over residues 22–50 (EGSK…EQPK), 58–68 (KKQDLDPETKQ), and 80–89 (AFRERKERKM). 2 short sequence motifs (bipartite nuclear localization signal) span residues 35–42 (HRRTGTRD) and 68–75 (QKRTAQNR). The region spanning 64–127 (PETKQKRTAQ…ITLVNELKKY (64 aa)) is the bZIP domain. Residues 67 to 90 (KQKRTAQNRAAQRAFRERKERKMK) are basic motif. The interval 92 to 120 (LEKKVQSLESIQQQNEVEATFLRDQLITL) is leucine-zipper. 2 disordered regions span residues 149–169 (HFSK…PNDD) and 183–251 (QYPL…PNSS). The segment covering 150–162 (FSKNNVNHSNSEP) has biased composition (polar residues). Phosphothreonine is present on Thr165. Residues 195–209 (SKNVGKQLPSPNDPS) are compositionally biased toward polar residues. Ser204 is subject to Phosphoserine. Residues 220–378 (QKKLSDATDS…YENSFSGFGR (159 aa)) form a transcription activation 1 region. Positions 226 to 246 (ATDSSSATLDSLSNSNDVLNN) are enriched in low complexity. Residues 303-315 (CSKMNQVCGTRQC) form a n-CRD region. 5 cysteine pairs are disulfide-bonded: Cys303/Cys598, Cys310/Cys629, Cys598/Cys620, Cys598/Cys629, and Cys620/Cys629. Ser372 is subject to Phosphoserine. Positions 392-414 (DNSTGSTDSTGSTGNKNKKNNNN) are enriched in low complexity. Disordered stretches follow at residues 392–419 (DNST…DDVL), 510–532 (LFGE…DDES), and 551–591 (LQSV…VPSK). A transcription activation 2 region spans residues 430-537 (NQVTNFFSPG…SDDESSLIKN (108 aa)). The residue at position 528 (Ser528) is a Phosphoserine. Residues 551 to 570 (LQSVPGNESEISQKNGSSLQ) are compositionally biased toward polar residues. A compositionally biased stretch (low complexity) spans 571–580 (NADKINNGND). Positions 598-629 (CSEIWDRITTHPKYSDIDVDGLCSELMAKAKC) are c-CRD. The Nuclear export signal signature appears at 614–621 (IDVDGLCS).

The protein belongs to the bZIP family. YAP subfamily. As to quaternary structure, interacts independent of oxidation state in the cytoplasm with the karyopherin PSE1/KAP121 (and less strongly with KAP123). The reduced form of YAP1 interacts in the nucleus with the nuclear export protein CRM1, and in the cytoplasm with YBP1 and the peroxiredoxin HYR1/GPX3/ORP1. Interacts with RBG1. Depending on the oxidative stress inducing agent, YAP1 can undergo two distinct conformational changes, both involving disulfide bond formation, and both masking the nuclear export signal, thus abolishing nuclear export by CRM1/exportin 1. The disulfide stress-inducing agent diamide leads to the formation of one of three possible disulfide bonds in the c-CRD. Peroxide stress induces the formation of the HYR1/GPX3- and YBP1-dependent interdomain disulfide bond between Cys-303 and Cys-598 (causing nuclear localization of YAP1), and the possibly stabilizing bond between Cys-310 and Cys-629 (required for full activity of YAP1).

It is found in the nucleus. Its subcellular location is the cytoplasm. Functionally, transcription activator involved in oxidative stress response and redox homeostasis. Regulates the transcription of genes encoding antioxidant enzymes and components of the cellular thiol-reducing pathways, including the thioredoxin system (TRX2, TRR1), the glutaredoxin system (GSH1, GLR1), superoxide dismutase (SOD1, SOD2), glutathione peroxidase (GPX2), and thiol-specific peroxidases (TSA1, AHP1). The induction of some of these genes requires the cooperative action of both, YAP1 and SKN7. Preferentially binds to promoters with the core binding site 5'-TTA[CG]TAA-3'. Activity of the transcription factor is controlled through oxidation of specific cysteine residues resulting in the alteration of its subcellular location. Oxidative stress (as well as carbon stress, but not increased temperature, acidic pH, or ionic stress) induces nuclear accumulation and as a result YAP1 transcriptional activity. Activation by hydrogen peroxide or thiol-reactive chemicals elicit distinct adaptive gene responses. Nuclear export is restored when disulfide bonds are reduced by thioredoxin (TRX2), whose expression is controlled by YAP1, providing a mechanism for negative autoregulation. When overexpressed, YAP1 confers pleiotropic drug-resistance and increases cellular tolerance to cadmium, iron chelators and zinc. The sequence is that of AP-1-like transcription factor YAP1 from Saccharomyces cerevisiae (strain ATCC 204508 / S288c) (Baker's yeast).